The primary structure comprises 1413 residues: DNA-directed RNA polymerase subunit beta' (1413 aa).

Cys-70, Cys-72, Cys-85, and Cys-88 together coordinate Zn(2+). Residues Asp-460, Asp-462, and Asp-464 each contribute to the Mg(2+) site. 4 residues coordinate Zn(2+): Cys-819, Cys-893, Cys-900, and Cys-903. Residues 1392–1413 (EEAFDFGTPSAPAEEPQHPAAE) form a disordered region.

The protein belongs to the RNA polymerase beta' chain family. The RNAP catalytic core consists of 2 alpha, 1 beta, 1 beta' and 1 omega subunit. When a sigma factor is associated with the core the holoenzyme is formed, which can initiate transcription. Mg(2+) is required as a cofactor. It depends on Zn(2+) as a cofactor.

It catalyses the reaction RNA(n) + a ribonucleoside 5'-triphosphate = RNA(n+1) + diphosphate. Its function is as follows. DNA-dependent RNA polymerase catalyzes the transcription of DNA into RNA using the four ribonucleoside triphosphates as substrates. This Burkholderia orbicola (strain MC0-3) protein is DNA-directed RNA polymerase subunit beta'.